The following is a 466-amino-acid chain: 3-isopropylmalate dehydratase large subunit (466 aa).

[4Fe-4S] cluster-binding residues include C347, C407, and C410.

It belongs to the aconitase/IPM isomerase family. LeuC type 1 subfamily. As to quaternary structure, heterodimer of LeuC and LeuD. Requires [4Fe-4S] cluster as cofactor.

It carries out the reaction (2R,3S)-3-isopropylmalate = (2S)-2-isopropylmalate. The protein operates within amino-acid biosynthesis; L-leucine biosynthesis; L-leucine from 3-methyl-2-oxobutanoate: step 2/4. In terms of biological role, catalyzes the isomerization between 2-isopropylmalate and 3-isopropylmalate, via the formation of 2-isopropylmaleate. In Pectobacterium carotovorum subsp. carotovorum (strain PC1), this protein is 3-isopropylmalate dehydratase large subunit.